Here is a 37-residue protein sequence, read N- to C-terminus: Delta-amaurobitoxin-Pl1a (37 aa).

4 disulfide bridges follow: cysteine 2-cysteine 18, cysteine 9-cysteine 23, cysteine 17-cysteine 33, and cysteine 25-cysteine 31. Serine 37 carries the serine amide modification.

It belongs to the neurotoxin 07 (Beta/delta-agtx) family. 02 (aga-3) subfamily. As to expression, expressed by the venom gland.

It localises to the secreted. Binds at site 4 of sodium channels (Nav) and inhibits the fast inactivation of cockroach channels. This toxin is active only on insects. Has a potent activity against S.litura larvae. The protein is Delta-amaurobitoxin-Pl1a of Pireneitega luctuosa (Tangled nest spider).